Consider the following 184-residue polypeptide: Putative YfeABCD regulator YfeE (184 aa).

3 helical membrane passes run 15 to 35 (IAGW…IINF), 84 to 104 (LSAG…GLSL), and 162 to 182 (ILPS…GIMI).

It to E.coli YniB.

Its subcellular location is the cell membrane. Its function is as follows. Putative regulator of YfeABCD, an ABC transporter locus involved in inorganic iron transport. The sequence is that of Putative YfeABCD regulator YfeE (yfeE) from Yersinia pestis.